A 153-amino-acid chain; its full sequence is Nuclear cap-binding protein subunit 2 (153 aa).

MRNA is bound by residues Tyr-17, Tyr-40, Arg-109 to Asp-113, Arg-120 to Arg-124, and Gln-130 to Val-131. The RRM domain occupies Cys-37–Gly-115.

This sequence belongs to the RRM NCBP2 family. In terms of assembly, component of the nuclear cap-binding complex (CBC), a heterodimer composed of ncbp1/cbp80 and ncbp2/cbp20 that interacts with m7GpppG-capped RNA.

The protein resides in the nucleus. It is found in the cytoplasm. Functionally, component of the cap-binding complex (CBC), which binds co-transcriptionally to the 5' cap of pre-mRNAs and is involved in various processes such as pre-mRNA splicing, translation regulation, nonsense-mediated mRNA decay, RNA-mediated gene silencing (RNAi) by microRNAs (miRNAs) and mRNA export. The CBC complex is involved in mRNA export from the nucleus, leading to the recruitment of the mRNA export machinery to the 5' end of mRNA and to mRNA export in a 5' to 3' direction through the nuclear pore. The CBC complex is also involved in mediating U snRNA and intronless mRNAs export from the nucleus. The CBC complex is essential for a pioneer round of mRNA translation, before steady state translation when the CBC complex is replaced by cytoplasmic cap-binding protein eIF4E. The pioneer round of mRNA translation mediated by the CBC complex plays a central role in nonsense-mediated mRNA decay (NMD), NMD only taking place in mRNAs bound to the CBC complex, but not on eIF4E-bound mRNAs. The CBC complex enhances NMD in mRNAs containing at least one exon-junction complex (EJC), promoting the interaction between upf1 and upf2. The CBC complex is also involved in 'failsafe' NMD, which is independent of the EJC complex, while it does not participate in Staufen-mediated mRNA decay (SMD). During cell proliferation, the CBC complex is also involved in microRNAs (miRNAs) biogenesis via its interaction with srrt/ars2, thereby being required for miRNA-mediated RNA interference. The CBC complex also acts as a negative regulator of parn, thereby acting as an inhibitor of mRNA deadenylation. In the CBC complex, ncbp2/cbp20 recognizes and binds capped RNAs (m7GpppG-capped RNA) but requires ncbp1/cbp80 to stabilize the movement of its N-terminal loop and lock the CBC into a high affinity cap-binding state with the cap structure. The conventional cap-binding complex with NCBP2 binds both small nuclear RNA (snRNA) and messenger (mRNA) and is involved in their export from the nucleus. The protein is Nuclear cap-binding protein subunit 2 (ncbp2) of Xenopus laevis (African clawed frog).